A 353-amino-acid polypeptide reads, in one-letter code: Nicotinate-nucleotide--dimethylbenzimidazole phosphoribosyltransferase (353 aa).

Glutamate 319 serves as the catalytic Proton acceptor.

The protein belongs to the CobT family.

The catalysed reaction is 5,6-dimethylbenzimidazole + nicotinate beta-D-ribonucleotide = alpha-ribazole 5'-phosphate + nicotinate + H(+). Its pathway is nucleoside biosynthesis; alpha-ribazole biosynthesis; alpha-ribazole from 5,6-dimethylbenzimidazole: step 1/2. Functionally, catalyzes the synthesis of alpha-ribazole-5'-phosphate from nicotinate mononucleotide (NAMN) and 5,6-dimethylbenzimidazole (DMB). This chain is Nicotinate-nucleotide--dimethylbenzimidazole phosphoribosyltransferase, found in Chlorobaculum parvum (strain DSM 263 / NCIMB 8327) (Chlorobium vibrioforme subsp. thiosulfatophilum).